Consider the following 184-residue polypeptide: Trypsin/chymotrypsin inhibitor (184 aa).

2 cysteine pairs are disulfide-bonded: Cys39-Cys84 and Cys136-Cys147.

This sequence belongs to the protease inhibitor I3 (leguminous Kunitz-type inhibitor) family. Homodimer.

Functionally, inhibits trypsin and alpha-chymotrypsin. The polypeptide is Trypsin/chymotrypsin inhibitor (Alocasia macrorrhizos (Giant taro)).